Here is a 350-residue protein sequence, read N- to C-terminus: tRNA uridine(34) hydroxylase (350 aa).

The region spanning 146–240 is the Rhodanese domain; it reads DDPDALFIDM…YARKAREQGL (95 aa). Cysteine 200 acts as the Cysteine persulfide intermediate in catalysis.

Belongs to the TrhO family.

It catalyses the reaction uridine(34) in tRNA + AH2 + O2 = 5-hydroxyuridine(34) in tRNA + A + H2O. In terms of biological role, catalyzes oxygen-dependent 5-hydroxyuridine (ho5U) modification at position 34 in tRNAs. The polypeptide is tRNA uridine(34) hydroxylase (Shigella flexneri serotype 5b (strain 8401)).